The sequence spans 109 residues: Sperm-specific class P protein 19 (109 aa).

An MSP domain is found at 1-109 (MSLTADPPAC…TVTIPMSATA (109 aa)).

In terms of assembly, monomer. Expressed at higher level in testis.

This is Sperm-specific class P protein 19 (ssp-19) from Caenorhabditis elegans.